Consider the following 180-residue polypeptide: Type-1 fimbrial protein subunit (180 aa).

A signal peptide spans 1 to 22 (MKKVLLPLAALVLSATASNAMA). A disulfide bridge connects residues Cys38 and Cys78.

The protein belongs to the fimbrial protein family.

The protein localises to the fimbrium. Its function is as follows. Fimbriae (also called pili), polar filaments radiating from the surface of the bacterium to a length of 0.5-1.5 micrometers and numbering 100-300 per cell, enable bacteria to colonize the epithelium of specific host organs. This chain is Type-1 fimbrial protein subunit (fimA), found in Serratia marcescens.